The sequence spans 604 residues: QVLDSPFPTGSAFGFSLRGAVDIDDNGYPDLIVGAYGANQVAVYRAQPVVKASVQLLVQDSLNPAVKSCVLPQTKTPVSCFKIQMCVGATGHNIPQKLSLNAELQLDRQKPRQGRRVLLLGSQQAGTTLNLDLGGKHSPICHTTMAFLRDEADIRDKLSPIVLSLNVSLPPTEAGMAPAVVLHGDTHVQEQTRIVLDCGEDDVCVPQLQLTASVTGSPLLVGADNVLELQMDTANEGEGAYEAELAVHLPQGAHYMRARSNVEGFERLICNQKKENETRVVLCELGNPMKKNTQIGIAMLVSVGNLEEAGESVSFQLQIRSKNSQNPNSKIVLLDVPVRAEAQVELRGNSFPASLVVAAEEGDREQNSLDSWGPKVEHTYELHNNGPGTVNGLHLSIHLPGQSQHSDLLYILDIQPQGGLQCFPQPPVNPLKVDWGLPTPSPSPVHPAHHKRDRRQIFLPEPEQPSRLQDPVLVSCDSAPCTVVQCDLQEMARGQRAMVTVLAFLWLPSLHQRPLDQFVLQSQAWFNVSSLPYAVPPLSLPRGEAQVRTQLLRALEERAIPIWWVLVGVLGGLLLLTILVLAMWKVGFFKRNRPPLEEDDEEGE.

An FG-GAP repeat occupies 1–61; it reads QVLDSPFPTG…ASVQLLVQDS (61 aa). Topologically, residues 1–558 are extracellular; sequence QVLDSPFPTG…TQLLRALEER (558 aa). Residues D22, D24, N26, Y28, and D30 each coordinate Ca(2+). 2 disulfides stabilise this stretch: C69–C80 and C86–C141. N166 carries an N-linked (GlcNAc...) asparagine glycan. Cystine bridges form between C198–C204, C270–C283, C422–C486, and C476–C481. N276 carries N-linked (GlcNAc...) asparagine glycosylation. The N-linked (GlcNAc...) asparagine glycan is linked to N527. Residues 559–584 traverse the membrane as a helical segment; it reads AIPIWWVLVGVLGGLLLLTILVLAMW. The Cytoplasmic segment spans residues 585–604; it reads KVGFFKRNRPPLEEDDEEGE. The GFFKR motif signature appears at 587 to 591; sequence GFFKR.

Belongs to the integrin alpha chain family. In terms of assembly, heterodimer of an alpha and a beta subunit. The alpha subunit is composed of a heavy and a light chain linked by a disulfide bond. Alpha-IIb associates with beta-3. Directly interacts with RNF181. Interacts (via C-terminus cytoplasmic tail region) with CIB1; the interaction is direct and calcium-dependent. Interacts (via C-terminus cytoplasmic tail region) with CIB2, CIB3 and CIB4; the interactions are stabilized/increased in a calcium and magnesium-dependent manner. ITGA2B:ITGB3 interacts with PPIA/CYPA; the interaction is ROS and PPIase activity-dependent and is increased in the presence of thrombin. ITGA2B:ITGB3 interacts with SELP (via C-type lectin domain); the interaction mediates cell-cell interaction and adhesion.

Its subcellular location is the membrane. Integrin alpha-IIb/beta-3 is a receptor for fibronectin, fibrinogen, plasminogen, prothrombin, thrombospondin and vitronectin. It recognizes the sequence R-G-D in a wide array of ligands. It recognizes the sequence H-H-L-G-G-G-A-K-Q-A-G-D-V in fibrinogen gamma chain. Following activation integrin alpha-IIb/beta-3 brings about platelet/platelet interaction through binding of soluble fibrinogen. This step leads to rapid platelet aggregation which physically plugs ruptured endothelial cell surface. The chain is Integrin alpha-IIb (ITGA2B) from Papio cynocephalus (Yellow baboon).